The primary structure comprises 189 residues: MSENYTPRLKTRYREEIREKLNGEFSYENVMQIPGVTKVVVNMGVGDAARDSKLINGAIEDLTKITGQKPQIRTAKKAIANFKLREGMPIGARVTLRGDRMWEFLDRLLTVALPRIRDFRGLNDKQFDGHGNYTFGLSEQSMFYEIDVDKIDRPRGMNITVVTTATNDDEGRALLRELGFPFKQKGSAE.

It belongs to the universal ribosomal protein uL5 family. In terms of assembly, part of the 50S ribosomal subunit; part of the 5S rRNA/L5/L18/L25 subcomplex. Contacts the 5S rRNA and the P site tRNA. Forms a bridge to the 30S subunit in the 70S ribosome.

Functionally, this is one of the proteins that bind and probably mediate the attachment of the 5S RNA into the large ribosomal subunit, where it forms part of the central protuberance. In the 70S ribosome it contacts protein S13 of the 30S subunit (bridge B1b), connecting the 2 subunits; this bridge is implicated in subunit movement. Contacts the P site tRNA; the 5S rRNA and some of its associated proteins might help stabilize positioning of ribosome-bound tRNAs. The polypeptide is Large ribosomal subunit protein uL5 (Corynebacterium jeikeium (strain K411)).